We begin with the raw amino-acid sequence, 249 residues long: Elongator complex protein 6 homolog (249 aa).

This sequence belongs to the ELP6 family. In terms of assembly, component of the elongator complex.

It localises to the cytoplasm. Its subcellular location is the nucleus. The protein operates within tRNA modification; 5-methoxycarbonylmethyl-2-thiouridine-tRNA biosynthesis. In terms of biological role, component of the elongator complex which is required for multiple tRNA modifications, including mcm5U (5-methoxycarbonylmethyl uridine), mcm5s2U (5-methoxycarbonylmethyl-2-thiouridine), and ncm5U (5-carbamoylmethyl uridine). The elongator complex catalyzes formation of carboxymethyluridine in the wobble base at position 34 in tRNAs. This is Elongator complex protein 6 homolog from Schizosaccharomyces pombe (strain 972 / ATCC 24843) (Fission yeast).